The sequence spans 148 residues: NADH-quinone oxidoreductase subunit C (148 aa).

Belongs to the complex I 30 kDa subunit family. NDH-1 is composed of 14 different subunits. Subunits NuoB, C, D, E, F, and G constitute the peripheral sector of the complex.

The protein localises to the cell membrane. It catalyses the reaction a quinone + NADH + 5 H(+)(in) = a quinol + NAD(+) + 4 H(+)(out). Its function is as follows. NDH-1 shuttles electrons from NADH, via FMN and iron-sulfur (Fe-S) centers, to quinones in the respiratory chain. The immediate electron acceptor for the enzyme in this species is believed to be a menaquinone. Couples the redox reaction to proton translocation (for every two electrons transferred, four hydrogen ions are translocated across the cytoplasmic membrane), and thus conserves the redox energy in a proton gradient. The polypeptide is NADH-quinone oxidoreductase subunit C (Moorella thermoacetica (strain ATCC 39073 / JCM 9320)).